Here is a 75-residue protein sequence, read N- to C-terminus: Caerin 1.11 (75 aa).

The signal sequence occupies residues 1–22 (MASLKKSLFLVLFLGFVSVSIC). Residues 23–49 (EEEKRQEDEDEHEEEGENQEEGSEEKR) constitute a propeptide that is removed on maturation. Residues 24–48 (EEKRQEDEDEHEEEGENQEEGSEEK) are disordered. Acidic residues predominate over residues 30 to 45 (DEDEHEEEGENQEEGS). Leucine 74 is subject to Leucine amide.

It belongs to the frog skin active peptide (FSAP) family. Caerin subfamily. As to expression, expressed by the skin glands.

It localises to the secreted. The protein localises to the target cell membrane. Functionally, cationic amphipathic alpha-helical antimicrobial peptide with weak or no activity against both Gram-positive and Gram-negative bacteria. Is weakly active against E.coli (MIC=25 uM), E.cloacae (MIC=50 uM), K.pneumoniae (MIC=25 uM), and S.haemolyticus (MIC=50 uM). Has no activity against S.typhimurium, S.enteritidis, B.megaterium, and S.aureus (MIC&gt;100 uM). This Ranoidea caerulea (Green tree frog) protein is Caerin 1.11.